The sequence spans 128 residues: Secreted RxLR effector protein RXLR-C09 (128 aa).

The first 22 residues, 1–22, serve as a signal peptide directing secretion; that stretch reads MRFCLVFIRLAAFVILSGGATS. The RxLR-dEER motif lies at 58–75; the sequence is RLLRLNDQADISGHDEER.

The protein belongs to the RxLR effector family.

The protein resides in the secreted. It localises to the host cell membrane. It is found in the host nucleus. Its function is as follows. Secreted effector that suppresses pattern-triggered immunity (PTI) in plant host. The protein is Secreted RxLR effector protein RXLR-C09 of Plasmopara halstedii (Downy mildew of sunflower).